A 501-amino-acid chain; its full sequence is MVRKPVVSTISKGGYLQGNVNGRLPSLGNKEPPGQEKVQLKRKVTLLRGVSIIIGTIIGAGIFISPKGVLQNTGSVGMSLTIWTVCGVLSLFGALSYAELGTTIKKSGGHYTYILEVFGPLPAFVRVWVELLIIRPAATAVISLAFGRYILEPFFIQCEIPELAIKLITAVGITVVMVLNSMSVSWSARIQIFLTFCKLTAILIIIVPGVMQLIKGQTQNFKDAFSGRDSSITRLPLAFYYGMYAYAGWFYLNFVTEEVENPEKTIPLAICISMAIVTIGYVLTNVAYFTTINAEELLLSNAVAVTFSERLLGNFSLAVPIFVALSCFGSMNGGVFAVSRLFYVASREGHLPEILSMIHVRKHTPLPAVIVLHPLTMIMLFSGDLDSLLNFLSFARWLFIGLAVAGLIYLRYKCPDMHRPFKVPLFIPALFSFTCLFMVALSLYSDPFSTGIGFVITLTGVPAYYLFIIWDKKPRWFRIMSEKITRTLQIILEVVPEEDKL.

Residues 1–43 (MVRKPVVSTISKGGYLQGNVNGRLPSLGNKEPPGQEKVQLKRK) lie on the Cytoplasmic side of the membrane. A Phosphoserine modification is found at Ser-26. The chain crosses the membrane as a helical span at residues 44–64 (VTLLRGVSIIIGTIIGAGIFI). Topologically, residues 65–74 (SPKGVLQNTG) are extracellular. Residues 75–95 (SVGMSLTIWTVCGVLSLFGAL) traverse the membrane as a helical segment. Topologically, residues 96–101 (SYAELG) are cytoplasmic. The stretch at 102–116 (TTIKKSGGHYTYILE) is an intramembrane region. The Cytoplasmic segment spans residues 117-130 (VFGPLPAFVRVWVE). Residues 131 to 150 (LLIIRPAATAVISLAFGRYI) traverse the membrane as a helical segment. Arg-135 contributes to the L-glutamate binding site. Topologically, residues 151–163 (LEPFFIQCEIPEL) are extracellular. The helical transmembrane segment at 164–179 (AIKLITAVGITVVMVL) threads the bilayer. At 180–193 (NSMSVSWSARIQIF) the chain is on the cytoplasmic side. The chain crosses the membrane as a helical span at residues 194–210 (LTFCKLTAILIIIVPGV). Topologically, residues 211-234 (MQLIKGQTQNFKDAFSGRDSSITR) are extracellular. Residues 235 to 255 (LPLAFYYGMYAYAGWFYLNFV) traverse the membrane as a helical segment. Tyr-244 lines the L-glutamate pocket. Over 256-265 (TEEVENPEKT) the chain is Cytoplasmic. Residues 266–286 (IPLAICISMAIVTIGYVLTNV) form a helical membrane-spanning segment. At 287 to 317 (AYFTTINAEELLLSNAVAVTFSERLLGNFSL) the chain is on the extracellular side. An N-linked (GlcNAc...) asparagine glycan is attached at Asn-314. A helical membrane pass occupies residues 318 to 338 (AVPIFVALSCFGSMNGGVFAV). Over 339–364 (SRLFYVASREGHLPEILSMIHVRKHT) the chain is Cytoplasmic. A helical membrane pass occupies residues 365-385 (PLPAVIVLHPLTMIMLFSGDL). At 386 to 387 (DS) the chain is on the extracellular side. The helical transmembrane segment at 388–408 (LLNFLSFARWLFIGLAVAGLI) threads the bilayer. The Cytoplasmic segment spans residues 409–422 (YLRYKCPDMHRPFK). Residues 423–443 (VPLFIPALFSFTCLFMVALSL) traverse the membrane as a helical segment. Over 444–449 (YSDPFS) the chain is Extracellular. The helical transmembrane segment at 450-470 (TGIGFVITLTGVPAYYLFIIW) threads the bilayer. Residues 471–501 (DKKPRWFRIMSEKITRTLQIILEVVPEEDKL) are Cytoplasmic-facing.

This sequence belongs to the amino acid-polyamine-organocation (APC) superfamily. L-type amino acid transporter (LAT) (TC 2.A.3.8) family. Disulfide-linked heterodimer with the amino acid transport protein SLC3A2/4F2hc; this interaction mediates cell membrane localization. Ubiquitinated by TRIM26; leading to proteasomal degradation. Expressed in term placenta and primary term cytotrophoblast. Expressed mainly in the brain, but also in pancreas.

It localises to the cell membrane. The protein resides in the cell projection. The protein localises to the microvillus membrane. The enzyme catalyses L-cystine(out) + L-glutamate(in) = L-cystine(in) + L-glutamate(out). It catalyses the reaction an L-alpha-amino acid(in) + L-kynurenine(out) = an L-alpha-amino acid(out) + L-kynurenine(in). The catalysed reaction is N-acetyl-L-cysteine(out) + L-glutamate(in) = N-acetyl-L-cysteine(in) + L-glutamate(out). Inhibited by erastin and sulfasalazine. Inhibited by (S)-lactate. Inactivated by p-chloromercuribenzoic acid and p-chloromercuribenzenesulfonic acid. Heterodimer with SLC3A2, that functions as an antiporter by mediating the exchange of extracellular anionic L-cystine and intracellular L-glutamate across the cellular plasma membrane. Provides L-cystine for the maintenance of the redox balance between extracellular L-cystine and L-cysteine and for the maintenance of the intracellular levels of glutathione that is essential for cells protection from oxidative stress. The transport is sodium-independent, electroneutral with a stoichiometry of 1:1, and is drove by the high intracellular concentration of L-glutamate and the intracellular reduction of L-cystine. In addition, mediates the import of L-kynurenine leading to anti-ferroptotic signaling propagation required to maintain L-cystine and glutathione homeostasis. Moreover, mediates N-acetyl-L-cysteine uptake into the placenta leading to subsequently down-regulation of pathways associated with oxidative stress, inflammation and apoptosis. In vitro can also transport L-aspartate. May participate in astrocyte and meningeal cell proliferation during development and can provide neuroprotection by promoting glutathione synthesis and delivery from non-neuronal cells such as astrocytes and meningeal cells to immature neurons. Controls the production of pheomelanin pigment directly. The protein is Cystine/glutamate transporter of Homo sapiens (Human).